The following is a 556-amino-acid chain: Oxygen-dependent choline dehydrogenase (556 aa).

Residue 4 to 33 coordinates FAD; it reads DYIIIGAGSAGNVLATRLTEDPNTSVLLLE. His-473 acts as the Proton acceptor in catalysis.

Belongs to the GMC oxidoreductase family. Requires FAD as cofactor.

The catalysed reaction is choline + A = betaine aldehyde + AH2. It carries out the reaction betaine aldehyde + NAD(+) + H2O = glycine betaine + NADH + 2 H(+). It participates in amine and polyamine biosynthesis; betaine biosynthesis via choline pathway; betaine aldehyde from choline (cytochrome c reductase route): step 1/1. Its function is as follows. Involved in the biosynthesis of the osmoprotectant glycine betaine. Catalyzes the oxidation of choline to betaine aldehyde and betaine aldehyde to glycine betaine at the same rate. This chain is Oxygen-dependent choline dehydrogenase, found in Shigella flexneri serotype 5b (strain 8401).